The chain runs to 456 residues: Bifunctional protein GlmU (456 aa).

A pyrophosphorylase region spans residues 1–230 (MDKRFAVVLA…FQETLGVNDR (230 aa)). UDP-N-acetyl-alpha-D-glucosamine contacts are provided by residues 9 to 12 (LAAG), Lys23, Gln73, and 78 to 79 (GT). A Mg(2+)-binding site is contributed by Asp103. The UDP-N-acetyl-alpha-D-glucosamine site is built by Gly140, Glu155, Asn170, and Asn228. Asn228 is a Mg(2+) binding site. Residues 231–251 (VALSQAEQFMKERINKRHMQN) are linker. Positions 252 to 456 (GVTLIDPMNT…DDYVKNIHKK (205 aa)) are N-acetyltransferase. Residues Arg333 and Lys351 each contribute to the UDP-N-acetyl-alpha-D-glucosamine site. His363 serves as the catalytic Proton acceptor. 2 residues coordinate UDP-N-acetyl-alpha-D-glucosamine: Tyr366 and Asn377. Acetyl-CoA-binding positions include 386–387 (NY), Ala423, and Arg440.

This sequence in the N-terminal section; belongs to the N-acetylglucosamine-1-phosphate uridyltransferase family. In the C-terminal section; belongs to the transferase hexapeptide repeat family. Homotrimer. Mg(2+) is required as a cofactor.

The protein localises to the cytoplasm. The catalysed reaction is alpha-D-glucosamine 1-phosphate + acetyl-CoA = N-acetyl-alpha-D-glucosamine 1-phosphate + CoA + H(+). It carries out the reaction N-acetyl-alpha-D-glucosamine 1-phosphate + UTP + H(+) = UDP-N-acetyl-alpha-D-glucosamine + diphosphate. It functions in the pathway nucleotide-sugar biosynthesis; UDP-N-acetyl-alpha-D-glucosamine biosynthesis; N-acetyl-alpha-D-glucosamine 1-phosphate from alpha-D-glucosamine 6-phosphate (route II): step 2/2. The protein operates within nucleotide-sugar biosynthesis; UDP-N-acetyl-alpha-D-glucosamine biosynthesis; UDP-N-acetyl-alpha-D-glucosamine from N-acetyl-alpha-D-glucosamine 1-phosphate: step 1/1. Its pathway is bacterial outer membrane biogenesis; LPS lipid A biosynthesis. Functionally, catalyzes the last two sequential reactions in the de novo biosynthetic pathway for UDP-N-acetylglucosamine (UDP-GlcNAc). The C-terminal domain catalyzes the transfer of acetyl group from acetyl coenzyme A to glucosamine-1-phosphate (GlcN-1-P) to produce N-acetylglucosamine-1-phosphate (GlcNAc-1-P), which is converted into UDP-GlcNAc by the transfer of uridine 5-monophosphate (from uridine 5-triphosphate), a reaction catalyzed by the N-terminal domain. This Bacillus subtilis (strain 168) protein is Bifunctional protein GlmU.